The chain runs to 505 residues: Trans-cinnamate 4-monooxygenase (505 aa).

The chain crosses the membrane as a helical span at residues 3–23 (LLLLEKTLLGSFVAVLVAILV). (E)-cinnamate contacts are provided by residues 213–218 (RSRLAQ) and Ala306. Cys447 is a binding site for heme.

The protein belongs to the cytochrome P450 family. Heme serves as cofactor.

The protein resides in the membrane. It carries out the reaction (E)-cinnamate + reduced [NADPH--hemoprotein reductase] + O2 = (E)-4-coumarate + oxidized [NADPH--hemoprotein reductase] + H2O + H(+). It functions in the pathway phenylpropanoid metabolism; trans-4-coumarate biosynthesis; trans-4-coumarate from trans-cinnamate: step 1/1. In terms of biological role, catalyzes the first oxidative step of the phenylpropanoid pathway in higher plants by transforming trans-cinnamate into p-coumarate. The compounds formed by this pathway are essential components for lignification, pollination, and defense against ultraviolet light, predators and pathogens. The sequence is that of Trans-cinnamate 4-monooxygenase (CYP73A16) from Populus kitakamiensis (Aspen).